A 345-amino-acid polypeptide reads, in one-letter code: Phosphoribosylformylglycinamidine cyclo-ligase (345 aa).

This sequence belongs to the AIR synthase family.

The protein localises to the cytoplasm. The catalysed reaction is 2-formamido-N(1)-(5-O-phospho-beta-D-ribosyl)acetamidine + ATP = 5-amino-1-(5-phospho-beta-D-ribosyl)imidazole + ADP + phosphate + H(+). It functions in the pathway purine metabolism; IMP biosynthesis via de novo pathway; 5-amino-1-(5-phospho-D-ribosyl)imidazole from N(2)-formyl-N(1)-(5-phospho-D-ribosyl)glycinamide: step 2/2. The sequence is that of Phosphoribosylformylglycinamidine cyclo-ligase from Shewanella baltica (strain OS185).